Here is a 395-residue protein sequence, read N- to C-terminus: ATP phosphoribosyltransferase regulatory subunit (395 aa).

It belongs to the class-II aminoacyl-tRNA synthetase family. HisZ subfamily. Heteromultimer composed of HisG and HisZ subunits.

It is found in the cytoplasm. It participates in amino-acid biosynthesis; L-histidine biosynthesis; L-histidine from 5-phospho-alpha-D-ribose 1-diphosphate: step 1/9. In terms of biological role, required for the first step of histidine biosynthesis. May allow the feedback regulation of ATP phosphoribosyltransferase activity by histidine. This Stutzerimonas stutzeri (Pseudomonas stutzeri) protein is ATP phosphoribosyltransferase regulatory subunit.